Reading from the N-terminus, the 473-residue chain is Ribulose bisphosphate carboxylase large chain (473 aa).

Residues asparagine 116 and threonine 166 each contribute to the substrate site. Lysine 168 acts as the Proton acceptor in catalysis. Residue lysine 170 coordinates substrate. Lysine 194, aspartate 196, and glutamate 197 together coordinate Mg(2+). At lysine 194 the chain carries N6-carboxylysine. Histidine 287 serves as the catalytic Proton acceptor. Residues arginine 288, histidine 320, and serine 372 each coordinate substrate.

Belongs to the RuBisCO large chain family. Type I subfamily. In terms of assembly, heterohexadecamer of 8 large chains and 8 small chains. It depends on Mg(2+) as a cofactor.

It carries out the reaction 2 (2R)-3-phosphoglycerate + 2 H(+) = D-ribulose 1,5-bisphosphate + CO2 + H2O. It catalyses the reaction D-ribulose 1,5-bisphosphate + O2 = 2-phosphoglycolate + (2R)-3-phosphoglycerate + 2 H(+). In terms of biological role, ruBisCO catalyzes two reactions: the carboxylation of D-ribulose 1,5-bisphosphate, the primary event in carbon dioxide fixation, as well as the oxidative fragmentation of the pentose substrate. Both reactions occur simultaneously and in competition at the same active site. The protein is Ribulose bisphosphate carboxylase large chain of Thiomonas intermedia (strain K12) (Thiobacillus intermedius).